Consider the following 1810-residue polypeptide: Trinucleotide repeat-containing gene 6B protein (1810 aa).

A compositionally biased stretch (acidic residues) spans 1–22 (MQTNEGEVEEESSSQVEQEDFV). Disordered regions lie at residues 1–221 (MQTN…PNPI), 235–1080 (EEWP…KKQM), 1141–1196 (MRKD…SSPG), and 1293–1329 (ALQQQQQQQQQQQRQPSMKHSPSHPVGPKPHLDNMVP). Positions 33–75 (GEESKQEKEQEREEQLMEDKKRKKEDKKKKEATQKVTEQKTKV) form a coiled coil. Basic and acidic residues-rich tracts occupy residues 34–52 (EESKQEKEQEREEQLMEDK) and 60–77 (KKKEATQKVTEQKTKVPE). Residues 37 to 1028 (KQEKEQEREE…AMKPNSKSMQ (992 aa)) are interaction with argonaute proteins. Residues 88–106 (AASPIGSSPSPPVNGGNNA) are compositionally biased toward low complexity. Basic and acidic residues predominate over residues 123-139 (MPREVPPRFRCQQDHKV). A compositionally biased stretch (low complexity) spans 165–174 (APGANPNNNA). The segment covering 180-190 (LLQSESGTAPE) has biased composition (polar residues). Composition is skewed to low complexity over residues 207 to 220 (GPGASSNSGASPNP) and 248 to 260 (SSENTTDNNSASN). 2 stretches are compositionally biased toward polar residues: residues 261–290 (PGSEKSSLPGSTTSNKGKGSQCQAASSGNE) and 306–327 (QPPNSTSDSNNGLGNWRSTSGQ). Composition is skewed to low complexity over residues 335–346 (GFSNFNPNSNPS), 363–380 (ETESSSSSAQVSTVGQAS), and 416–425 (NSLNLSSPNP). Polar residues predominate over residues 438 to 451 (GNTSRSTDAPSQST). Over residues 475–486 (SGQSNSGNNGNN) the composition is skewed to low complexity. Polar residues-rich tracts occupy residues 504–528 (GSKSDSWDNNNRSTGGSWNFGPQDN), 564–575 (GPNQPNSSTGAW), 611–623 (TGSNHKAGSSDSH), and 655–667 (LSNTGWGQTQIKQ). Positions 675 to 688 (EVPRPEGKSDKGTE) are enriched in basic and acidic residues. Polar residues-rich tracts occupy residues 774 to 783 (QPNQGWTSGK) and 793 to 804 (VKNNNWESSANK). Residues 809-824 (WGEGGQNEIGTWGNGG) are compositionally biased toward gly residues. The span at 846–857 (TGRQPNSWNKQH) shows a compositional bias: polar residues. S913 is modified (phosphoserine). Polar residues-rich tracts occupy residues 934–950 (NSYNYKNVNLWDKNSQG), 964–975 (TGKSASVWSKST), 1004–1027 (ASTTGWGNTPANAPNAMKPNSKSM), 1057–1072 (TAGSQGSTSSHNSASW), and 1175–1195 (GNSTAQSRGLHTPVQPLSSSP). The tract at residues 1191-1700 (LSSSPGLRAQ…LAEFATEDEV (510 aa)) is silencing domain; interaction with CNOT1 and PAN3. Residues 1295 to 1307 (QQQQQQQQQQQRQ) are compositionally biased toward low complexity. The residue at position 1409 (S1409) is a Phosphoserine. T1426 is subject to Phosphothreonine. S1438 is subject to Phosphoserine. At T1441 the chain carries Phosphothreonine. Residues 1449 to 1467 (SNASWPPEFQPGVPWKGIQ) form a PABPC1-interacting motif-2 (PAM2) region. Positions 1568-1619 (SSRNTTPLTRPPPGLTNPKPASPWSSTAPRSVRGWGTQDSRIASASTWSDGG) are disordered. Positions 1604 to 1617 (TQDSRIASASTWSD) are enriched in polar residues. The region spanning 1625-1697 (YWLVLHNLTP…TTILAEFATE (73 aa)) is the RRM domain. Disordered stretches follow at residues 1706–1740 (QAQPPTPAATPSAPATGWQSLETSQNQADPVGPAL) and 1786–1810 (EDPHRMGSPAPLLPGDLLGGGSDSI). Positions 1722 to 1733 (GWQSLETSQNQA) are enriched in polar residues. Residues 1792-1801 (GSPAPLLPGD) are compositionally biased toward low complexity. A phosphoserine mark is found at S1793 and S1809.

The protein belongs to the GW182 family. Interacts with AGO1, AGO2, AGO3 and AGO4. Interacts with CNOT1; the interaction mediates the association with the CCR4-NOT complex. Interacts with PAN3; the interaction mediates the association with the PAN complex. Interacts with MOV10; the interaction is direct and RNA-dependent.

The protein resides in the cytoplasm. The protein localises to the P-body. Functionally, plays a role in RNA-mediated gene silencing by both micro-RNAs (miRNAs) and short interfering RNAs (siRNAs). Required for miRNA-dependent translational repression and siRNA-dependent endonucleolytic cleavage of complementary mRNAs by argonaute family proteins. As scaffolding protein associates with argonaute proteins bound to partially complementary mRNAs and simultaneously can recruit CCR4-NOT and PAN deadenylase complexes. This is Trinucleotide repeat-containing gene 6B protein (Tnrc6b) from Mus musculus (Mouse).